A 303-amino-acid polypeptide reads, in one-letter code: Cytoplasmic envelopment protein 1 (303 aa).

The protein belongs to the herpesviridae cytoplasmic envelopment protein 1 family.

It localises to the virion. Its subcellular location is the virion tegument. The protein localises to the host cytoplasm. The protein resides in the host Golgi apparatus. Plays a critical role in cytoplasmic virus egress. Participates in the final step of tegumentation and envelope acquisition within the host cytoplasm. The polypeptide is Cytoplasmic envelopment protein 1 (Equine herpesvirus 1 (strain Ab4p) (EHV-1)).